We begin with the raw amino-acid sequence, 164 residues long: Small ribosomal subunit protein uS5 (164 aa).

One can recognise an S5 DRBM domain in the interval 10-73; it reads IEERVVAINR…ESAKKNMIEV (64 aa).

The protein belongs to the universal ribosomal protein uS5 family. As to quaternary structure, part of the 30S ribosomal subunit. Contacts proteins S4 and S8.

With S4 and S12 plays an important role in translational accuracy. In terms of biological role, located at the back of the 30S subunit body where it stabilizes the conformation of the head with respect to the body. The protein is Small ribosomal subunit protein uS5 of Streptococcus suis (strain 98HAH33).